Consider the following 401-residue polypeptide: 8-amino-7-oxononanoate synthase (401 aa).

Arg24 is a substrate binding site. Residue 111 to 112 (GF) coordinates pyridoxal 5'-phosphate. Residue His137 participates in substrate binding. Pyridoxal 5'-phosphate is bound by residues Ser183, His211, and Thr240. Lys243 is modified (N6-(pyridoxal phosphate)lysine). Residue Thr357 participates in substrate binding.

This sequence belongs to the class-II pyridoxal-phosphate-dependent aminotransferase family. BioF subfamily. Homodimer. Pyridoxal 5'-phosphate is required as a cofactor.

It carries out the reaction 6-carboxyhexanoyl-[ACP] + L-alanine + H(+) = (8S)-8-amino-7-oxononanoate + holo-[ACP] + CO2. The protein operates within cofactor biosynthesis; biotin biosynthesis. In terms of biological role, catalyzes the decarboxylative condensation of pimeloyl-[acyl-carrier protein] and L-alanine to produce 8-amino-7-oxononanoate (AON), [acyl-carrier protein], and carbon dioxide. The sequence is that of 8-amino-7-oxononanoate synthase from Xanthomonas axonopodis pv. citri (strain 306).